The following is a 202-amino-acid chain: NADH-quinone oxidoreductase subunit B (202 aa).

[4Fe-4S] cluster is bound by residues cysteine 81, cysteine 82, cysteine 146, and cysteine 176.

Belongs to the complex I 20 kDa subunit family. NDH-1 is composed of 14 different subunits. Subunits NuoB, C, D, E, F, and G constitute the peripheral sector of the complex. Requires [4Fe-4S] cluster as cofactor.

It is found in the cell inner membrane. The enzyme catalyses a quinone + NADH + 5 H(+)(in) = a quinol + NAD(+) + 4 H(+)(out). Its function is as follows. NDH-1 shuttles electrons from NADH, via FMN and iron-sulfur (Fe-S) centers, to quinones in the respiratory chain. The immediate electron acceptor for the enzyme in this species is believed to be ubiquinone. Couples the redox reaction to proton translocation (for every two electrons transferred, four hydrogen ions are translocated across the cytoplasmic membrane), and thus conserves the redox energy in a proton gradient. The protein is NADH-quinone oxidoreductase subunit B of Bradyrhizobium diazoefficiens (strain JCM 10833 / BCRC 13528 / IAM 13628 / NBRC 14792 / USDA 110).